The primary structure comprises 766 residues: Ubiquitin carboxyl-terminal hydrolase creB (766 aa).

The interval 1–32 (MGSFLKSFRKDVGSAAPSVGAPPAKKEPQPLP) is disordered. A compositionally biased stretch (low complexity) spans 13-23 (GSAAPSVGAPP). In terms of domain architecture, USP spans 55 to 466 (YGMENFGNTC…CAYVLFYQET (412 aa)). The Nucleophile role is filled by Cys-64. Disordered stretches follow at residues 115 to 145 (EALA…KDSP) and 243 to 266 (ESPQ…SRTP). Residues 249 to 263 (SDVSDSVIPSSSSGS) are compositionally biased toward low complexity. Residue His-417 is the Proton acceptor of the active site. Positions 526–752 (APTAPQLSTH…HDRSSHGKWR (227 aa)) are disordered. Over residues 548-572 (SPAPDPAPLTSLPPIPPIPETPPAP) the composition is skewed to pro residues. The stretch at 573 to 620 (LTSRKSDLQSKKERVKEEKERKAAEKEKEKQRRKEIETRLKDRQRRED) forms a coiled coil. Basic and acidic residues-rich tracts occupy residues 576–643 (RKSD…RNHA) and 734–747 (EQEH…DRSS).

Belongs to the peptidase C19 family. In terms of assembly, interacts with creA, creC and qutD.

The catalysed reaction is Thiol-dependent hydrolysis of ester, thioester, amide, peptide and isopeptide bonds formed by the C-terminal Gly of ubiquitin (a 76-residue protein attached to proteins as an intracellular targeting signal).. Ubiquitin thioesterase component of the regulatory network controlling carbon source utilization through ubiquitination and deubiquitination involving creA, creB, creC, creD and acrB. Deubiquitinates the creA catabolic repressor and the quinate permease qutD. Also plays a role in response to carbon starvation and the control of extracellular proteases activity. The polypeptide is Ubiquitin carboxyl-terminal hydrolase creB (creB) (Emericella nidulans (strain FGSC A4 / ATCC 38163 / CBS 112.46 / NRRL 194 / M139) (Aspergillus nidulans)).